The sequence spans 475 residues: Splicing factor U2AF 65 kDa subunit (475 aa).

The segment at 1 to 90 (MSDFDEFERQ…RHEKKKKVRK (90 aa)) is disordered. S2 bears the N-acetylserine mark. At S2 the chain carries Phosphoserine. The required for interaction with PRPF19 stretch occupies residues 2–93 (SDFDEFERQL…KKKKVRKYWD (92 aa)). Over residues 7–22 (FERQLNENKQERDKEN) the composition is skewed to basic and acidic residues. K15 is modified (5-hydroxylysine; by JMJD6; alternate). Residue K15 forms a Glycyl lysine isopeptide (Lys-Gly) (interchain with G-Cter in SUMO2); alternate linkage. The segment at 17-47 (ERDKENRHRKRSHSRSRSRDRKRRSRSRDRR) is necessary and sufficient to stimulate pre-mRNAs 3'-end cleavage in a CFIm complex-dependent manner. Residues 23 to 46 (RHRKRSHSRSRSRDRKRRSRSRDR) show a composition bias toward basic residues. A compositionally biased stretch (basic and acidic residues) spans 47-56 (RNRDQRSASR). K70 participates in a covalent cross-link: Glycyl lysine isopeptide (Lys-Gly) (interchain with G-Cter in SUMO2); alternate. The residue at position 70 (K70) is an N6-acetyllysine; alternate. At S79 the chain carries Phosphoserine. The span at 79–89 (SPRHEKKKKVR) shows a compositional bias: basic residues. RRM domains lie at 149–231 (RRLY…RPHD), 259–337 (HKLF…RASV), and 385–466 (LPEE…YCDP). K276 carries the 5-hydroxylysine; by JMJD6 modification. The residue at position 294 (S294) is a Phosphoserine.

This sequence belongs to the splicing factor SR family. In terms of assembly, interacts with U2AF1L4. Heterodimer with U2AF1. Binds unphosphorylated SF1. Interacts with SCAF11 and SNW1. Interacts with ZRSR2/U2AF1-RS2. Interacts with RBM17. Interacts with PRPF19; the interaction is direct. Interacts with POLR2A (via the C-terminal domain); recruits PRPF19 and the Prp19 complex to the pre-mRNA. Interacts with KHDC4 (Isoform 2). Interacts with ZRSR2. Interacts with the SF3B complex composed of SF3B1, SF3B2, SF3B3, SF3B4, SF3B5, SF3B6 and PHF5A. Interacts (via N-terminus) with CPSF7 (via C-terminus); this interaction stimulates pre-mRNA 3'-end processing by promoting the recruitment of the CFIm complex to cleavage and polyadenylation signals. Interacts with ARGLU1; interaction may be involved in ARGLU1-mediated modulation of alternative splicing. In terms of processing, lysyl-hydroxylation at Lys-15 and Lys-276 affects the mRNA splicing activity of the protein, leading to regulate some, but not all, alternative splicing events.

The protein localises to the nucleus. In terms of biological role, plays a role in pre-mRNA splicing and 3'-end processing. By recruiting PRPF19 and the PRP19C/Prp19 complex/NTC/Nineteen complex to the RNA polymerase II C-terminal domain (CTD), and thereby pre-mRNA, may couple transcription to splicing. Induces cardiac troponin-T (TNNT2) pre-mRNA exon inclusion in muscle. Regulates the TNNT2 exon 5 inclusion through competition with MBNL1. Binds preferentially to a single-stranded structure within the polypyrimidine tract of TNNT2 intron 4 during spliceosome assembly. Required for the export of mRNA out of the nucleus, even if the mRNA is encoded by an intron-less gene. Represses the splicing of MAPT/Tau exon 10. Positively regulates pre-mRNA 3'-end processing by recruiting the CFIm complex to cleavage and polyadenylation signals. The polypeptide is Splicing factor U2AF 65 kDa subunit (U2AF2) (Homo sapiens (Human)).